The sequence spans 678 residues: DNA ligase (678 aa).

Residues 47-51 (DSDYD), 96-97 (SL), and glutamate 122 each bind NAD(+). The active-site N6-AMP-lysine intermediate is lysine 124. Residues arginine 145, glutamate 182, lysine 300, and lysine 324 each contribute to the NAD(+) site. Residues cysteine 418, cysteine 421, cysteine 436, and cysteine 442 each coordinate Zn(2+). Residues 602–678 (AYNESFTGKT…ILEDNLKDLL (77 aa)) enclose the BRCT domain.

The protein belongs to the NAD-dependent DNA ligase family. LigA subfamily. Mg(2+) is required as a cofactor. The cofactor is Mn(2+).

It catalyses the reaction NAD(+) + (deoxyribonucleotide)n-3'-hydroxyl + 5'-phospho-(deoxyribonucleotide)m = (deoxyribonucleotide)n+m + AMP + beta-nicotinamide D-nucleotide.. Functionally, DNA ligase that catalyzes the formation of phosphodiester linkages between 5'-phosphoryl and 3'-hydroxyl groups in double-stranded DNA using NAD as a coenzyme and as the energy source for the reaction. It is essential for DNA replication and repair of damaged DNA. This chain is DNA ligase, found in Francisella tularensis subsp. tularensis (strain SCHU S4 / Schu 4).